Consider the following 191-residue polypeptide: Pyridoxal 5'-phosphate synthase subunit PdxT (191 aa).

An L-glutamine-binding site is contributed by 52-54; the sequence is GES. The active-site Nucleophile is the Cys81. Residues Arg108 and 136–137 contribute to the L-glutamine site; that span reads IR. Active-site charge relay system residues include His172 and Glu174.

The protein belongs to the glutaminase PdxT/SNO family. As to quaternary structure, in the presence of PdxS, forms a dodecamer of heterodimers. Only shows activity in the heterodimer.

It carries out the reaction aldehydo-D-ribose 5-phosphate + D-glyceraldehyde 3-phosphate + L-glutamine = pyridoxal 5'-phosphate + L-glutamate + phosphate + 3 H2O + H(+). It catalyses the reaction L-glutamine + H2O = L-glutamate + NH4(+). The protein operates within cofactor biosynthesis; pyridoxal 5'-phosphate biosynthesis. Catalyzes the hydrolysis of glutamine to glutamate and ammonia as part of the biosynthesis of pyridoxal 5'-phosphate. The resulting ammonia molecule is channeled to the active site of PdxS. This is Pyridoxal 5'-phosphate synthase subunit PdxT from Actinobacillus pleuropneumoniae serotype 7 (strain AP76).